The chain runs to 434 residues: Glutamate-1-semialdehyde 2,1-aminomutase 1 (434 aa).

An N6-(pyridoxal phosphate)lysine modification is found at lysine 270.

It belongs to the class-III pyridoxal-phosphate-dependent aminotransferase family. HemL subfamily. In terms of assembly, homodimer. Pyridoxal 5'-phosphate is required as a cofactor.

Its subcellular location is the cytoplasm. The catalysed reaction is (S)-4-amino-5-oxopentanoate = 5-aminolevulinate. It functions in the pathway porphyrin-containing compound metabolism; protoporphyrin-IX biosynthesis; 5-aminolevulinate from L-glutamyl-tRNA(Glu): step 2/2. In Bacillus cereus (strain ATCC 10987 / NRS 248), this protein is Glutamate-1-semialdehyde 2,1-aminomutase 1.